The sequence spans 414 residues: 3-isopropylmalate dehydratase large subunit (414 aa).

Residues Cys-295, Cys-353, and Cys-356 each contribute to the [4Fe-4S] cluster site.

This sequence belongs to the aconitase/IPM isomerase family. LeuC type 2 subfamily. In terms of assembly, heterodimer of LeuC and LeuD. Requires [4Fe-4S] cluster as cofactor.

It catalyses the reaction (2R,3S)-3-isopropylmalate = (2S)-2-isopropylmalate. Its pathway is amino-acid biosynthesis; L-leucine biosynthesis; L-leucine from 3-methyl-2-oxobutanoate: step 2/4. Its function is as follows. Catalyzes the isomerization between 2-isopropylmalate and 3-isopropylmalate, via the formation of 2-isopropylmaleate. This is 3-isopropylmalate dehydratase large subunit from Pyrobaculum islandicum (strain DSM 4184 / JCM 9189 / GEO3).